Reading from the N-terminus, the 85-residue chain is UPF0335 protein Plav_2034 (85 aa).

The protein belongs to the UPF0335 family.

This chain is UPF0335 protein Plav_2034, found in Parvibaculum lavamentivorans (strain DS-1 / DSM 13023 / NCIMB 13966).